Reading from the N-terminus, the 92-residue chain is Small ribosomal subunit protein uS19c (92 aa).

It belongs to the universal ribosomal protein uS19 family. Component of the chloroplast small ribosomal subunit (SSU). Mature 70S chloroplast ribosomes of higher plants consist of a small (30S) and a large (50S) subunit. The 30S small subunit contains 1 molecule of ribosomal RNA (16S rRNA) and 24 different proteins. The 50S large subunit contains 3 rRNA molecules (23S, 5S and 4.5S rRNA) and 33 different proteins. uS19c binds directly to 16S ribosomal RNA.

It localises to the plastid. It is found in the chloroplast. Component of the chloroplast ribosome (chloro-ribosome), a dedicated translation machinery responsible for the synthesis of chloroplast genome-encoded proteins, including proteins of the transcription and translation machinery and components of the photosynthetic apparatus. This chain is Small ribosomal subunit protein uS19c (rps19), found in Spinacia oleracea (Spinach).